The sequence spans 166 residues: Ureidoglycolate lyase (166 aa).

This sequence belongs to the ureidoglycolate lyase family. As to quaternary structure, homodimer. Ni(2+) serves as cofactor.

It carries out the reaction (S)-ureidoglycolate = urea + glyoxylate. Its pathway is nitrogen metabolism; (S)-allantoin degradation. Catalyzes the catabolism of the allantoin degradation intermediate (S)-ureidoglycolate, generating urea and glyoxylate. Involved in the utilization of allantoin as nitrogen source. This Rhizobium etli (strain CIAT 652) protein is Ureidoglycolate lyase.